The following is a 422-amino-acid chain: Gamma-glutamyl phosphate reductase (422 aa).

Belongs to the gamma-glutamyl phosphate reductase family.

The protein localises to the cytoplasm. The enzyme catalyses L-glutamate 5-semialdehyde + phosphate + NADP(+) = L-glutamyl 5-phosphate + NADPH + H(+). It functions in the pathway amino-acid biosynthesis; L-proline biosynthesis; L-glutamate 5-semialdehyde from L-glutamate: step 2/2. Catalyzes the NADPH-dependent reduction of L-glutamate 5-phosphate into L-glutamate 5-semialdehyde and phosphate. The product spontaneously undergoes cyclization to form 1-pyrroline-5-carboxylate. This chain is Gamma-glutamyl phosphate reductase, found in Chloroflexus aggregans (strain MD-66 / DSM 9485).